A 208-amino-acid chain; its full sequence is MILKFCGIKTKVEALSIRPLNINMVGFIHYPKSKRHLDIEQINKLSRLLPDEIDRVVVLVNPTLQLIKKIINATNINAIQLHGDETIDFIKQLRLNFKNIKIIKALPATQNIINDINQFKEHIDLFIIDTPSEQYGGTGQSFDWTLLKGLDQSIPFLIAGGIDVDKIKQIETLKLNHLGYDISSSIETDGMKDKNKMLTVIQQVKGEL.

The protein belongs to the TrpF family.

The enzyme catalyses N-(5-phospho-beta-D-ribosyl)anthranilate = 1-(2-carboxyphenylamino)-1-deoxy-D-ribulose 5-phosphate. It participates in amino-acid biosynthesis; L-tryptophan biosynthesis; L-tryptophan from chorismate: step 3/5. This Staphylococcus haemolyticus (strain JCSC1435) protein is N-(5'-phosphoribosyl)anthranilate isomerase.